A 132-amino-acid chain; its full sequence is MTEYCFPRHVRLLNAGDYQSVFNDTSSKVFAGEFLLLARKRDDDQTRLGLIVSKKTDKRAVGRNRIKRLVRDSFRHHKIPLSGLDIVFLARHGIKELENADLHNRLDKAWDQLAKKALKPTQNKKRDQSRQK.

This sequence belongs to the RnpA family. Consists of a catalytic RNA component (M1 or rnpB) and a protein subunit.

It carries out the reaction Endonucleolytic cleavage of RNA, removing 5'-extranucleotides from tRNA precursor.. RNaseP catalyzes the removal of the 5'-leader sequence from pre-tRNA to produce the mature 5'-terminus. It can also cleave other RNA substrates such as 4.5S RNA. The protein component plays an auxiliary but essential role in vivo by binding to the 5'-leader sequence and broadening the substrate specificity of the ribozyme. The chain is Ribonuclease P protein component from Marinomonas sp. (strain MWYL1).